A 102-amino-acid polypeptide reads, in one-letter code: Iron-sulfur cluster assembly protein CyaY (102 aa).

The protein belongs to the frataxin family.

Functionally, involved in iron-sulfur (Fe-S) cluster assembly. May act as a regulator of Fe-S biogenesis. The protein is Iron-sulfur cluster assembly protein CyaY of Histophilus somni (strain 129Pt) (Haemophilus somnus).